The following is an 840-amino-acid chain: Phosphatidylglycerol lysyltransferase (840 aa).

Topologically, residues 1–8 (MNQEVKNK) are cytoplasmic. A helical membrane pass occupies residues 9–29 (IFSILKITFATALFIFVAITL). At 30–52 (YRELSGINFKDTLVEFSKINRMS) the chain is on the extracellular side. Residues 53–73 (LVLLFIGGGASLVILSMYDVI) form a helical membrane-spanning segment. Residues 74-89 (LSRALKMDISLGKVLR) are Cytoplasmic-facing. The chain crosses the membrane as a helical span at residues 90 to 110 (VSYIINALNAIVGFGGFIGAG). Over 111–128 (VRAMVYKNYTHDKKKLVH) the chain is Extracellular. Residues 129–149 (FISLILISMLTGLSLLSLLIV) traverse the membrane as a helical segment. Residues 150-161 (FHVFDASLILDK) are Cytoplasmic-facing. Residues 162 to 182 (ITWVRWVLYVVSFFLPLFIIY) form a helical membrane-spanning segment. Over 183–200 (SMVRPPDKNNRFVGLYCT) the chain is Extracellular. A helical membrane pass occupies residues 201–221 (LVSCVEWLAAAVVLYFCGVIV). The Cytoplasmic portion of the chain corresponds to 222-229 (DAHVSFMS). Residues 230 to 250 (FIAIFIIAALSGLVSFIPGGF) form a helical membrane-spanning segment. The Extracellular portion of the chain corresponds to 251–271 (GAFDLVVLLGFKTLGVPEEKV). A helical transmembrane segment spans residues 272-292 (LLMLLLYRFAYYFVPVIIALI). Over 293–337 (LSSFEFGTSAKKYIEGSKYFIPAKDVTSFLMSYQKDIIAKIPSLS) the chain is Cytoplasmic. A helical membrane pass occupies residues 338-358 (LAILVFFTSMIFFVNNLTIVY). Residues 359 to 369 (DALYDGNHLTY) lie on the Extracellular side of the membrane. A helical membrane pass occupies residues 370–390 (YILLAIHTSACLLLLLNVVGI). The Cytoplasmic portion of the chain corresponds to 391-394 (YKQS). 2 helical membrane-spanning segments follow: residues 395 to 415 (RRAI…TFFT) and 416 to 436 (YASY…IVAF). Residues 437 to 450 (RRARRLKRPVRMRN) lie on the Cytoplasmic side of the membrane. The chain crosses the membrane as a helical span at residues 451–471 (IVAMLLFSLFILYVNHIFIAG). Topologically, residues 472-489 (TLYALDIYTIEMHTSVLR) are extracellular. Residues 490-510 (YYFWLTILIIAIIIGMIAWLF) traverse the membrane as a helical segment. Topologically, residues 511–840 (DYQFSKVRIS…SKVMRVIRHK (330 aa)) are cytoplasmic.

The protein belongs to the LPG synthase family.

The protein localises to the cell membrane. It catalyses the reaction L-lysyl-tRNA(Lys) + a 1,2-diacyl-sn-glycero-3-phospho-(1'-sn-glycerol) = a 1,2-diacyl-sn-glycero-3-phospho-1'-(3'-O-L-lysyl)-sn-glycerol + tRNA(Lys). In terms of biological role, catalyzes the transfer of a lysyl group from L-lysyl-tRNA(Lys) to membrane-bound phosphatidylglycerol (PG), which produces lysylphosphatidylglycerol (LPG), a major component of the bacterial membrane with a positive net charge. LPG synthesis contributes to bacterial virulence as it is involved in the resistance mechanism against cationic antimicrobial peptides (CAMP) produces by the host's immune system (defensins, cathelicidins) and by the competing microorganisms (bacteriocins). In fact, the modification of anionic phosphatidylglycerol with positively charged L-lysine results in repulsion of the peptides. The polypeptide is Phosphatidylglycerol lysyltransferase (mprF) (Staphylococcus aureus (strain COL)).